Here is a 261-residue protein sequence, read N- to C-terminus: MTHQTHAYHMVNPSPWPLTGALSALLMTSGLTMWFHFNSTILLMLGLTTNMLTMYQWWRDIIRESTFQGHHTPVVQKGLRYGMILFIISEVLFFTGFFWAFYHSSLAPTPELGGCWPPTGIHPLNPLEVPLLNTSVLLASGVSITWAHHSLMEGHRNHMLQALFITIALGVYFTLLQASEYYEAPFTISDGVYGSTFFVATGFHGLHVIIGSTFLIVCFFRQLKFHFTSSHHFGFEAAAWYWHFVDVVWLFLYVSIYWWGS.

The Mitochondrial matrix segment spans residues 1-15 (MTHQTHAYHMVNPSP). A helical membrane pass occupies residues 16–34 (WPLTGALSALLMTSGLTMW). The Mitochondrial intermembrane segment spans residues 35–40 (FHFNST). Residues 41 to 66 (ILLMLGLTTNMLTMYQWWRDIIREST) traverse the membrane as a helical segment. Topologically, residues 67–72 (FQGHHT) are mitochondrial matrix. A helical transmembrane segment spans residues 73 to 105 (PVVQKGLRYGMILFIISEVLFFTGFFWAFYHSS). Residues 106 to 128 (LAPTPELGGCWPPTGIHPLNPLE) are Mitochondrial intermembrane-facing. The helical transmembrane segment at 129–152 (VPLLNTSVLLASGVSITWAHHSLM) threads the bilayer. Over 153 to 155 (EGH) the chain is Mitochondrial matrix. The chain crosses the membrane as a helical span at residues 156-183 (RNHMLQALFITIALGVYFTLLQASEYYE). Residues 184-190 (APFTISD) lie on the Mitochondrial intermembrane side of the membrane. A helical transmembrane segment spans residues 191–223 (GVYGSTFFVATGFHGLHVIIGSTFLIVCFFRQL). The Mitochondrial matrix portion of the chain corresponds to 224–232 (KFHFTSSHH). A helical transmembrane segment spans residues 233–256 (FGFEAAAWYWHFVDVVWLFLYVSI). At 257 to 261 (YWWGS) the chain is on the mitochondrial intermembrane side.

The protein belongs to the cytochrome c oxidase subunit 3 family. As to quaternary structure, component of the cytochrome c oxidase (complex IV, CIV), a multisubunit enzyme composed of 14 subunits. The complex is composed of a catalytic core of 3 subunits MT-CO1, MT-CO2 and MT-CO3, encoded in the mitochondrial DNA, and 11 supernumerary subunits COX4I, COX5A, COX5B, COX6A, COX6B, COX6C, COX7A, COX7B, COX7C, COX8 and NDUFA4, which are encoded in the nuclear genome. The complex exists as a monomer or a dimer and forms supercomplexes (SCs) in the inner mitochondrial membrane with NADH-ubiquinone oxidoreductase (complex I, CI) and ubiquinol-cytochrome c oxidoreductase (cytochrome b-c1 complex, complex III, CIII), resulting in different assemblies (supercomplex SCI(1)III(2)IV(1) and megacomplex MCI(2)III(2)IV(2)).

The protein localises to the mitochondrion inner membrane. The enzyme catalyses 4 Fe(II)-[cytochrome c] + O2 + 8 H(+)(in) = 4 Fe(III)-[cytochrome c] + 2 H2O + 4 H(+)(out). Component of the cytochrome c oxidase, the last enzyme in the mitochondrial electron transport chain which drives oxidative phosphorylation. The respiratory chain contains 3 multisubunit complexes succinate dehydrogenase (complex II, CII), ubiquinol-cytochrome c oxidoreductase (cytochrome b-c1 complex, complex III, CIII) and cytochrome c oxidase (complex IV, CIV), that cooperate to transfer electrons derived from NADH and succinate to molecular oxygen, creating an electrochemical gradient over the inner membrane that drives transmembrane transport and the ATP synthase. Cytochrome c oxidase is the component of the respiratory chain that catalyzes the reduction of oxygen to water. Electrons originating from reduced cytochrome c in the intermembrane space (IMS) are transferred via the dinuclear copper A center (CU(A)) of subunit 2 and heme A of subunit 1 to the active site in subunit 1, a binuclear center (BNC) formed by heme A3 and copper B (CU(B)). The BNC reduces molecular oxygen to 2 water molecules using 4 electrons from cytochrome c in the IMS and 4 protons from the mitochondrial matrix. The polypeptide is Cytochrome c oxidase subunit 3 (MT-CO3) (Tragelaphus strepsiceros (Greater kudu)).